We begin with the raw amino-acid sequence, 764 residues long: Polyribonucleotide nucleotidyltransferase (764 aa).

2 residues coordinate Mg(2+): Asp-555 and Asp-561. The KH domain occupies 621–680; the sequence is PHITSINIPQNKIGEVIGPKGKTINQITEETGANITIEDDGTVFISAVGGESAREAEEKI. The S1 motif domain occupies 692 to 761; it reads GDRFLGTVVK…NRGKISLVLV (70 aa).

It belongs to the polyribonucleotide nucleotidyltransferase family. Requires Mg(2+) as cofactor.

The protein localises to the cytoplasm. It carries out the reaction RNA(n+1) + phosphate = RNA(n) + a ribonucleoside 5'-diphosphate. Its function is as follows. Involved in mRNA degradation. Catalyzes the phosphorolysis of single-stranded polyribonucleotides processively in the 3'- to 5'-direction. The polypeptide is Polyribonucleotide nucleotidyltransferase (Corynebacterium jeikeium (strain K411)).